Reading from the N-terminus, the 85-residue chain is Large ribosomal subunit protein bL31B (85 aa).

Belongs to the bacterial ribosomal protein bL31 family. Type B subfamily. As to quaternary structure, part of the 50S ribosomal subunit.

This is Large ribosomal subunit protein bL31B from Stutzerimonas stutzeri (strain A1501) (Pseudomonas stutzeri).